The sequence spans 102 residues: DLQVLKPEPELIYGDLRGSVTFDCALGQEMANVAKFLCQLKNGKTCNVVINTLGKKAQDFEGRILLTPKENSHFSVHITGLRKEDAGHYLCGXHPDGEPKEG.

As to quaternary structure, interacts (mainly via CDR1-like domain) with dimeric IgA. Interacts (mainly via CDR2-like domain) with pentameric IgM. Either free or part of the secretory IgA (sIgA) complex that consists of two, four or five IgA monomers, and two additional non-Ig polypeptides, namely the JCHAIN and the secretory component (the proteolytic product of PIGR). Free secretory component interacts with bacterial antigens toxA of C.difficile and eaeA of E.coli. In terms of processing, N-glycosylated. N-glycosylation is required for anchoring IgA molecules to mucus, but is not necessary for Ig binding.

The protein localises to the cell membrane. Its subcellular location is the secreted. Mediates selective transcytosis of polymeric IgA and IgM across mucosal epithelial cells. Binds polymeric IgA and IgM at the basolateral surface of epithelial cells. The complex is then transported across the cell to be secreted at the apical surface. During this process, a cleavage occurs that separates the extracellular (known as the secretory component) from the transmembrane segment. Through its N-linked glycans ensures anchoring of secretory IgA (sIgA) molecules to mucus lining the epithelial surface to neutralize extracellular pathogens. On its own (free form) may act as a non-specific microbial scavenger to prevent pathogen interaction with epithelial cells. The chain is Polymeric immunoglobulin receptor (PIGR) from Sus scrofa (Pig).